Consider the following 336-residue polypeptide: ATP-dependent 6-phosphofructokinase (336 aa).

Glycine 11 lines the ATP pocket. 21-25 serves as a coordination point for ADP; the sequence is RAVVR. Residues 72 to 73 and 102 to 105 each bind ATP; these read RY and GDGS. Aspartate 103 contributes to the Mg(2+) binding site. Substrate is bound at residue 125–127; it reads TID. The Proton acceptor role is filled by aspartate 127. Residue arginine 154 coordinates ADP. Substrate is bound by residues arginine 162 and 169-171; that span reads MGR. ADP contacts are provided by residues 185-187, lysine 211, and 213-215; these read GAD and KKH. Substrate contacts are provided by residues glutamate 222, arginine 244, and 250–253; that span reads HIQR.

This sequence belongs to the phosphofructokinase type A (PFKA) family. ATP-dependent PFK group I subfamily. Prokaryotic clade 'B1' sub-subfamily. Homotetramer. Mg(2+) serves as cofactor.

It localises to the cytoplasm. The catalysed reaction is beta-D-fructose 6-phosphate + ATP = beta-D-fructose 1,6-bisphosphate + ADP + H(+). It functions in the pathway carbohydrate degradation; glycolysis; D-glyceraldehyde 3-phosphate and glycerone phosphate from D-glucose: step 3/4. Its activity is regulated as follows. Allosterically activated by ADP and other diphosphonucleosides, and allosterically inhibited by phosphoenolpyruvate. Functionally, catalyzes the phosphorylation of D-fructose 6-phosphate to fructose 1,6-bisphosphate by ATP, the first committing step of glycolysis. This is ATP-dependent 6-phosphofructokinase from Streptococcus suis (strain 05ZYH33).